The chain runs to 555 residues: Formate--tetrahydrofolate ligase (555 aa).

It belongs to the formate--tetrahydrofolate ligase family.

The enzyme catalyses (6S)-5,6,7,8-tetrahydrofolate + formate + ATP = (6R)-10-formyltetrahydrofolate + ADP + phosphate. The protein operates within one-carbon metabolism; tetrahydrofolate interconversion. The chain is Formate--tetrahydrofolate ligase from Porphyromonas gingivalis (strain ATCC BAA-308 / W83).